A 119-amino-acid chain; its full sequence is Protein yippee-like 2 (119 aa).

The region spanning arginine 19–asparagine 116 is the Yippee domain. Residues cysteine 23, cysteine 26, cysteine 79, and cysteine 82 each contribute to the Zn(2+) site.

It belongs to the yippee family. May interact with FAM168B.

Its subcellular location is the nucleus. The protein localises to the nucleolus. This is Protein yippee-like 2 (YPEL2) from Chlorocebus aethiops (Green monkey).